A 313-amino-acid chain; its full sequence is NADH-ubiquinone oxidoreductase chain 2 (313 aa).

The next 10 membrane-spanning stretches (helical) occupy residues 3 to 23 (IWII…FIFW), 47 to 67 (SMIT…ISSF), 81 to 101 (INIS…LIMI), 105 to 125 (LTFY…LLII), 128 to 148 (FMNS…SIMA), 153 to 173 (LIKQ…LCLI), 177 to 197 (MNFW…IIIN), 220 to 240 (NTMI…GFFM), 253 to 275 (LIFM…RILT), and 293 to 313 (KSNF…NIFF).

It belongs to the complex I subunit 2 family.

It is found in the mitochondrion inner membrane. It carries out the reaction a ubiquinone + NADH + 5 H(+)(in) = a ubiquinol + NAD(+) + 4 H(+)(out). In terms of biological role, core subunit of the mitochondrial membrane respiratory chain NADH dehydrogenase (Complex I) that is believed to belong to the minimal assembly required for catalysis. Complex I functions in the transfer of electrons from NADH to the respiratory chain. The immediate electron acceptor for the enzyme is believed to be ubiquinone. This is NADH-ubiquinone oxidoreductase chain 2 (ND2) from Rhipicephalus sanguineus (Brown dog tick).